The following is a 433-amino-acid chain: 3-phosphoshikimate 1-carboxyvinyltransferase (433 aa).

Positions 23, 24, and 28 each coordinate 3-phosphoshikimate. Residue lysine 23 participates in phosphoenolpyruvate binding. Phosphoenolpyruvate-binding residues include glycine 95 and arginine 123. Positions 170, 171, 172, 198, 317, and 344 each coordinate 3-phosphoshikimate. Position 172 (glutamine 172) interacts with phosphoenolpyruvate. Aspartate 317 acts as the Proton acceptor in catalysis. Arginine 348, arginine 391, and lysine 416 together coordinate phosphoenolpyruvate.

Belongs to the EPSP synthase family. In terms of assembly, monomer.

It is found in the cytoplasm. It carries out the reaction 3-phosphoshikimate + phosphoenolpyruvate = 5-O-(1-carboxyvinyl)-3-phosphoshikimate + phosphate. It functions in the pathway metabolic intermediate biosynthesis; chorismate biosynthesis; chorismate from D-erythrose 4-phosphate and phosphoenolpyruvate: step 6/7. Its function is as follows. Catalyzes the transfer of the enolpyruvyl moiety of phosphoenolpyruvate (PEP) to the 5-hydroxyl of shikimate-3-phosphate (S3P) to produce enolpyruvyl shikimate-3-phosphate and inorganic phosphate. This Neisseria meningitidis serogroup B (strain ATCC BAA-335 / MC58) protein is 3-phosphoshikimate 1-carboxyvinyltransferase.